The chain runs to 508 residues: 2'-5'-oligoadenylate synthase-like protein 2 (508 aa).

S69 serves as a coordination point for ATP. 3 residues coordinate Mg(2+): D81, D83, and D154. The ATP site is built by R213 and K216. Residues I435–E473 form the Ubiquitin-like domain.

It belongs to the 2-5A synthase family. The cofactor is Mg(2+). Strongly expressed in spleen dendritic cells, whereas, in bone marrow-derived dendritic cells, the amount increases during the maturation process. Expressed in many organs, the highest levels being in thymus, lung, and bone marrow.

It carries out the reaction 3 ATP = 5'-triphosphoadenylyl-(2'-&gt;5')-adenylyl-(2'-&gt;5')-adenosine + 2 diphosphate. Its activity is regulated as follows. Produced as a latent enzyme which is activated by dsRNA generated during the course of viral infection. The dsRNA activator must be at least 15 nucleotides long, and no modification of the 2'-hydroxyl group is tolerated. ssRNA or dsDNA do not act as activators. Its function is as follows. Interferon-induced, dsRNA-activated antiviral enzyme which plays a critical role in cellular innate antiviral response. Synthesizes oligomers of 2'-5'-oligoadenylates (2-5A) from ATP which then bind to the inactive monomeric form of ribonuclease L (RNase L) leading to its dimerization and subsequent activation. Activation of RNase L leads to degradation of cellular as well as viral RNA, resulting in the inhibition of protein synthesis, thus terminating viral replication. Can mediate the antiviral effect via the classical RNase L-dependent pathway or an alternative antiviral pathway independent of RNase L. The sequence is that of 2'-5'-oligoadenylate synthase-like protein 2 (Oasl2) from Mus musculus (Mouse).